A 497-amino-acid polypeptide reads, in one-letter code: uncharacterized protein (497 aa).

ABC transporter domains are found at residues 9–247 and 256–496; these read VSVR…MGQA and ARPA…TGMA. 41 to 48 is an ATP binding site; the sequence is GGNGAGKS.

The protein belongs to the ABC transporter superfamily. Ribose importer (TC 3.A.1.2.1) family.

The protein resides in the cell membrane. In terms of biological role, probably part of the binding-protein-dependent transport system y4mIJK. This system probably transports a sugar. Probably responsible for energy coupling to the transport system. This is an uncharacterized protein from Sinorhizobium fredii (strain NBRC 101917 / NGR234).